The following is a 60-amino-acid chain: Toxin FS-2 (60 aa).

4 disulfide bridges follow: Cys-3–Cys-22, Cys-17–Cys-39, Cys-41–Cys-52, and Cys-53–Cys-58. The important for binding to L-type calcium channels stretch occupies residues 41 to 48 (CPTAMWPY).

It belongs to the three-finger toxin family. Short-chain subfamily. L-type calcium blocker sub-subfamily. In terms of tissue distribution, expressed by the venom gland.

The protein localises to the secreted. Its function is as follows. Specific blocker of the voltage-dependent L-type calcium channel (Cav1/CACNA1). Inhibits cardiac contractions. In Dendroaspis polylepis polylepis (Black mamba), this protein is Toxin FS-2.